A 462-amino-acid chain; its full sequence is Cysteine--tRNA ligase (462 aa).

Cysteine 29 lines the Zn(2+) pocket. The 'HIGH' region signature appears at 31 to 41 (PTVYDHAHIGN). Residues cysteine 214, histidine 239, and glutamate 243 each contribute to the Zn(2+) site. The short motif at 272–276 (KMSKS) is the 'KMSKS' region element. Lysine 275 lines the ATP pocket.

This sequence belongs to the class-I aminoacyl-tRNA synthetase family. Monomer. Zn(2+) serves as cofactor.

The protein resides in the cytoplasm. It catalyses the reaction tRNA(Cys) + L-cysteine + ATP = L-cysteinyl-tRNA(Cys) + AMP + diphosphate. In Xanthobacter autotrophicus (strain ATCC BAA-1158 / Py2), this protein is Cysteine--tRNA ligase.